We begin with the raw amino-acid sequence, 372 residues long: Bifunctional enzyme IspD/IspF (372 aa).

The tract at residues 1–210 is 2-C-methyl-D-erythritol 4-phosphate cytidylyltransferase; it reads MLDLSLIMLG…LNLNSPSNDI (210 aa). The interval 211–372 is 2-C-methyl-D-erythritol 2,4-cyclodiphosphate synthase; that stretch reads FCGNGFDVHA…LKYFNWRNVL (162 aa). Residues Asp-217 and His-219 each contribute to the a divalent metal cation site. 4-CDP-2-C-methyl-D-erythritol 2-phosphate-binding positions include 217–219 and 243–244; these read DVH and HS. Position 251 (His-251) interacts with a divalent metal cation. Residues 265–267, 270–274, 341–344, Phe-348, and Arg-351 contribute to the 4-CDP-2-C-methyl-D-erythritol 2-phosphate site; these read DIG, YPDND, and TTTE.

This sequence in the N-terminal section; belongs to the IspD/TarI cytidylyltransferase family. IspD subfamily. In the C-terminal section; belongs to the IspF family. It depends on a divalent metal cation as a cofactor.

The catalysed reaction is 2-C-methyl-D-erythritol 4-phosphate + CTP + H(+) = 4-CDP-2-C-methyl-D-erythritol + diphosphate. It catalyses the reaction 4-CDP-2-C-methyl-D-erythritol 2-phosphate = 2-C-methyl-D-erythritol 2,4-cyclic diphosphate + CMP. Its pathway is isoprenoid biosynthesis; isopentenyl diphosphate biosynthesis via DXP pathway; isopentenyl diphosphate from 1-deoxy-D-xylulose 5-phosphate: step 2/6. The protein operates within isoprenoid biosynthesis; isopentenyl diphosphate biosynthesis via DXP pathway; isopentenyl diphosphate from 1-deoxy-D-xylulose 5-phosphate: step 4/6. Bifunctional enzyme that catalyzes the formation of 4-diphosphocytidyl-2-C-methyl-D-erythritol from CTP and 2-C-methyl-D-erythritol 4-phosphate (MEP) (IspD), and catalyzes the conversion of 4-diphosphocytidyl-2-C-methyl-D-erythritol 2-phosphate (CDP-ME2P) to 2-C-methyl-D-erythritol 2,4-cyclodiphosphate (ME-CPP) with a corresponding release of cytidine 5-monophosphate (CMP) (IspF). This is Bifunctional enzyme IspD/IspF from Campylobacter fetus subsp. fetus (strain 82-40).